We begin with the raw amino-acid sequence, 278 residues long: Neuronal membrane glycoprotein M6-a (278 aa).

An N-acetylmethionine modification is found at M1. Topologically, residues 1 to 22 (MEENMEEGQTQKGCFECCIKCL) are cytoplasmic. Residues 23–43 (GGIPYASLIATILLYAGVALF) traverse the membrane as a helical segment. Over 44–84 (CGCGHEALSGTVNILQTYFEMARTAGDTLDVFTMIDIFKYV) the chain is Extracellular. The chain crosses the membrane as a helical span at residues 85–105 (IYGIAAAFFVYGILLMVEGFF). The Cytoplasmic segment spans residues 106–127 (TTGAIKDLYGDFKITTCGRCVS). A helical transmembrane segment spans residues 128-148 (AWFIMLTYLFMLAWLGVTAFT). At 149–213 (SLPVYMYFNV…STELNMTFHL (65 aa)) the chain is on the extracellular side. N-linked (GlcNAc...) asparagine glycosylation occurs at N164. C174 and C192 form a disulfide bridge. N208 carries N-linked (GlcNAc...) asparagine glycosylation. A helical membrane pass occupies residues 214–234 (FIVALAGAGAAVIAMVHYLMV). Residues 235-278 (LSANWAYVKDACRMQKYEDIKSKEEQELHDIHSTRSKERLNAYT) lie on the Cytoplasmic side of the membrane. A Phosphoserine modification is found at S256. T278 bears the Phosphothreonine mark.

Belongs to the myelin proteolipid protein family. In terms of assembly, interacts with OPRM1. Interacts with palmitoyltransferase ZDHHC17/HIP14; the interaction leads to palmitoylation of GPM6A. N-glycosylated. Post-translationally, palmitoylated by ZDHHC17/HIP14. As to expression, expressed in hippocampus (at protein level). Isoform 1 is the predominant isoform expressed in brain, specifically in hippocampus. Isoform 2 is expressed at low levels in brain and kidney.

Its subcellular location is the cell membrane. It is found in the cell projection. The protein resides in the axon. It localises to the growth cone. The protein localises to the dendritic spine. Its subcellular location is the filopodium. It is found in the neuron projection. Involved in neuronal differentiation, including differentiation and migration of neuronal stem cells. Plays a role in neuronal plasticity and is involved in neurite and filopodia outgrowth, filopodia motility and probably synapse formation. Gpm6a-induced filopodia formation involves mitogen-activated protein kinase (MAPK) and Src signaling pathways. May be involved in neuronal NGF-dependent Ca(2+) influx. May be involved in regulation of endocytosis and intracellular trafficking of G-protein-coupled receptors (GPCRs); enhances internalization and recycling of mu-type opioid receptor. In Rattus norvegicus (Rat), this protein is Neuronal membrane glycoprotein M6-a (Gpm6a).